Consider the following 87-residue polypeptide: Small ribosomal subunit protein uS17 (87 aa).

This sequence belongs to the universal ribosomal protein uS17 family. Part of the 30S ribosomal subunit.

One of the primary rRNA binding proteins, it binds specifically to the 5'-end of 16S ribosomal RNA. In Syntrophobacter fumaroxidans (strain DSM 10017 / MPOB), this protein is Small ribosomal subunit protein uS17.